The chain runs to 254 residues: Aspartate/glutamate leucyltransferase (254 aa).

This sequence belongs to the R-transferase family. Bpt subfamily.

The protein localises to the cytoplasm. It carries out the reaction N-terminal L-glutamyl-[protein] + L-leucyl-tRNA(Leu) = N-terminal L-leucyl-L-glutamyl-[protein] + tRNA(Leu) + H(+). It catalyses the reaction N-terminal L-aspartyl-[protein] + L-leucyl-tRNA(Leu) = N-terminal L-leucyl-L-aspartyl-[protein] + tRNA(Leu) + H(+). Its function is as follows. Functions in the N-end rule pathway of protein degradation where it conjugates Leu from its aminoacyl-tRNA to the N-termini of proteins containing an N-terminal aspartate or glutamate. The sequence is that of Aspartate/glutamate leucyltransferase from Mesorhizobium japonicum (strain LMG 29417 / CECT 9101 / MAFF 303099) (Mesorhizobium loti (strain MAFF 303099)).